The chain runs to 908 residues: Probable disease resistance RPP8-like protein 4 (908 aa).

A coiled-coil region spans residues 15-57 (DLLSRESERLQGIDEQLDGLKRQLRSLQSLLKDADAKKHGSDR). Positions 146 to 459 (RQRVQREIRQ…AEGIYDGSTI (314 aa)) constitute an NB-ARC domain. Position 192-199 (192-199 (GMGGIGKT)) interacts with ATP. LRR repeat units lie at residues 575-599 (LTLL…SIGG), 600-623 (LIHL…MRNL), and 842-867 (MPCL…KYIT).

This sequence belongs to the disease resistance NB-LRR family. RPP8/HRT subfamily.

Potential disease resistance protein. This is Probable disease resistance RPP8-like protein 4 (RPP8L4) from Arabidopsis thaliana (Mouse-ear cress).